Reading from the N-terminus, the 586-residue chain is Malonate--CoA ligase ACSF3, mitochondrial (586 aa).

The N-terminal 89 residues, 1-89 (MPLPYVGMAL…SREICQLRAC (89 aa)), are a transit peptide targeting the mitochondrion. ATP contacts are provided by residues 203-211 (TSGTTGRPK), aspartate 457, arginine 471, and lysine 563.

This sequence belongs to the ATP-dependent AMP-binding enzyme family.

It is found in the mitochondrion. It carries out the reaction tetracosanoate + ATP + CoA = tetracosanoyl-CoA + AMP + diphosphate. The catalysed reaction is malonate + ATP + CoA = malonyl-CoA + AMP + diphosphate. Catalyzes the initial reaction in intramitochondrial fatty acid synthesis, by activating malonate and methylmalonate, but not acetate, into their respective CoA thioester. May have some preference toward very-long-chain substrates. The sequence is that of Malonate--CoA ligase ACSF3, mitochondrial from Bos taurus (Bovine).